We begin with the raw amino-acid sequence, 117 residues long: Large ribosomal subunit protein bL20 (117 aa).

The protein belongs to the bacterial ribosomal protein bL20 family.

In terms of biological role, binds directly to 23S ribosomal RNA and is necessary for the in vitro assembly process of the 50S ribosomal subunit. It is not involved in the protein synthesizing functions of that subunit. The polypeptide is Large ribosomal subunit protein bL20 (Aliivibrio salmonicida (strain LFI1238) (Vibrio salmonicida (strain LFI1238))).